The following is a 541-amino-acid chain: Eukaryotic translation initiation factor 3 subunit D-1 (541 aa).

Residues valine 98 to leucine 136 form a disordered region. Residues lysine 100–asparagine 120 are compositionally biased toward basic residues.

The protein belongs to the eIF-3 subunit D family. As to quaternary structure, component of the eukaryotic translation initiation factor 3 (eIF-3) complex. The eIF-3 complex interacts with pix.

The protein localises to the cytoplasm. In terms of biological role, mRNA cap-binding component of the eukaryotic translation initiation factor 3 (eIF-3) complex, which is involved in protein synthesis of a specialized repertoire of mRNAs and, together with other initiation factors, stimulates binding of mRNA and methionyl-tRNAi to the 40S ribosome. The eIF-3 complex specifically targets and initiates translation of a subset of mRNAs involved in cell proliferation. In the eIF-3 complex, eif3d specifically recognizes and binds the 7-methylguanosine cap of a subset of mRNAs. This is Eukaryotic translation initiation factor 3 subunit D-1 from Drosophila persimilis (Fruit fly).